The primary structure comprises 333 residues: L-lactate dehydrogenase (333 aa).

Residues Gly-29–Lys-57 and Arg-99 contribute to the NAD(+) site. The substrate site is built by Arg-106, Asn-138, and Arg-169. Asn-138 serves as a coordination point for NAD(+). The active-site Proton acceptor is the His-193. Thr-249 contributes to the substrate binding site.

It belongs to the LDH/MDH superfamily. LDH family. Homotetramer.

It is found in the cytoplasm. The enzyme catalyses (S)-lactate + NAD(+) = pyruvate + NADH + H(+). It participates in fermentation; pyruvate fermentation to lactate; (S)-lactate from pyruvate: step 1/1. This Caenorhabditis elegans protein is L-lactate dehydrogenase (ldh-1).